A 124-amino-acid chain; its full sequence is Large ribosomal subunit protein bL12 (124 aa).

The protein belongs to the bacterial ribosomal protein bL12 family. As to quaternary structure, homodimer. Part of the ribosomal stalk of the 50S ribosomal subunit. Forms a multimeric L10(L12)X complex, where L10 forms an elongated spine to which 2 to 4 L12 dimers bind in a sequential fashion. Binds GTP-bound translation factors.

Forms part of the ribosomal stalk which helps the ribosome interact with GTP-bound translation factors. Is thus essential for accurate translation. The chain is Large ribosomal subunit protein bL12 from Herminiimonas arsenicoxydans.